Reading from the N-terminus, the 374-residue chain is N-acetyldiaminopimelate deacetylase (374 aa).

The active site involves Asp-69. Glu-128 functions as the Proton acceptor in the catalytic mechanism.

The protein belongs to the peptidase M20A family. N-acetyldiaminopimelate deacetylase subfamily.

The enzyme catalyses N-acetyl-(2S,6S)-2,6-diaminopimelate + H2O = (2S,6S)-2,6-diaminopimelate + acetate. It functions in the pathway amino-acid biosynthesis; L-lysine biosynthesis via DAP pathway; LL-2,6-diaminopimelate from (S)-tetrahydrodipicolinate (acetylase route): step 3/3. Functionally, catalyzes the conversion of N-acetyl-diaminopimelate to diaminopimelate and acetate. In Bacillus licheniformis (strain ATCC 14580 / DSM 13 / JCM 2505 / CCUG 7422 / NBRC 12200 / NCIMB 9375 / NCTC 10341 / NRRL NRS-1264 / Gibson 46), this protein is N-acetyldiaminopimelate deacetylase.